Reading from the N-terminus, the 99-residue chain is Aspartyl/glutamyl-tRNA(Asn/Gln) amidotransferase subunit C (99 aa).

It belongs to the GatC family. Heterotrimer of A, B and C subunits.

It catalyses the reaction L-glutamyl-tRNA(Gln) + L-glutamine + ATP + H2O = L-glutaminyl-tRNA(Gln) + L-glutamate + ADP + phosphate + H(+). The enzyme catalyses L-aspartyl-tRNA(Asn) + L-glutamine + ATP + H2O = L-asparaginyl-tRNA(Asn) + L-glutamate + ADP + phosphate + 2 H(+). In terms of biological role, allows the formation of correctly charged Asn-tRNA(Asn) or Gln-tRNA(Gln) through the transamidation of misacylated Asp-tRNA(Asn) or Glu-tRNA(Gln) in organisms which lack either or both of asparaginyl-tRNA or glutaminyl-tRNA synthetases. The reaction takes place in the presence of glutamine and ATP through an activated phospho-Asp-tRNA(Asn) or phospho-Glu-tRNA(Gln). In Orientia tsutsugamushi (strain Ikeda) (Rickettsia tsutsugamushi), this protein is Aspartyl/glutamyl-tRNA(Asn/Gln) amidotransferase subunit C.